Here is a 201-residue protein sequence, read N- to C-terminus: Small ribosomal subunit protein uS4c (201 aa).

Residues 15–45 are disordered; that stretch reads LGDLPGLSRKAIKRSYPPGEHGQKSRKPSEY. Positions 35–45 are enriched in basic and acidic residues; sequence HGQKSRKPSEY. In terms of domain architecture, S4 RNA-binding spans 90–153; that stretch reads MRLDNTVFRL…ASRKLVENYL (64 aa).

The protein belongs to the universal ribosomal protein uS4 family. As to quaternary structure, part of the 30S ribosomal subunit. Contacts protein S5. The interaction surface between S4 and S5 is involved in control of translational fidelity.

Its subcellular location is the plastid. The protein resides in the chloroplast. Its function is as follows. One of the primary rRNA binding proteins, it binds directly to 16S rRNA where it nucleates assembly of the body of the 30S subunit. Functionally, with S5 and S12 plays an important role in translational accuracy. The polypeptide is Small ribosomal subunit protein uS4c (rps4) (Pyropia yezoensis (Susabi-nori)).